Reading from the N-terminus, the 202-residue chain is Probable chemoreceptor glutamine deamidase CheD 2 (202 aa).

Belongs to the CheD family.

The enzyme catalyses L-glutaminyl-[protein] + H2O = L-glutamyl-[protein] + NH4(+). Functionally, probably deamidates glutamine residues to glutamate on methyl-accepting chemotaxis receptors (MCPs), playing an important role in chemotaxis. The protein is Probable chemoreceptor glutamine deamidase CheD 2 of Shewanella oneidensis (strain ATCC 700550 / JCM 31522 / CIP 106686 / LMG 19005 / NCIMB 14063 / MR-1).